A 153-amino-acid chain; its full sequence is UPF0266 membrane protein SG1324 (153 aa).

The next 3 membrane-spanning stretches (helical) occupy residues 6–26 (IGLV…EFIV), 46–66 (LDGL…ITTD), and 68–88 (KVMT…LAYI).

It belongs to the UPF0266 family.

It is found in the cell inner membrane. In Sodalis glossinidius (strain morsitans), this protein is UPF0266 membrane protein SG1324.